Here is a 156-residue protein sequence, read N- to C-terminus: Inorganic triphosphatase (156 aa).

One can recognise a CYTH domain in the interval 2 to 148 (GKEIEKKFIV…PRYLNSNLVK (147 aa)). Residue tyrosine 29 is the Proton acceptor of the active site.

In terms of assembly, homodimer.

The catalysed reaction is triphosphate + H2O = phosphate + diphosphate. It carries out the reaction ATP + H2O = ADP + phosphate + H(+). Involved in the hydrolysis of the beta-gamma-phosphoanhydride linkage of triphosphate-containing substrates (inorganic or nucleoside-linked). Catalyzes vigorously the hydrolysis of inorganic triphosphate (PPPi), however it can also catalyze the hydrolysis of ATP to ADP and phosphate. It can use ribonucleotides such as GTP, CTP, or UTP and deoxynucleotides such as dATP, dGTP, dCTP, and dTTP. In Acetivibrio thermocellus (strain ATCC 27405 / DSM 1237 / JCM 9322 / NBRC 103400 / NCIMB 10682 / NRRL B-4536 / VPI 7372) (Clostridium thermocellum), this protein is Inorganic triphosphatase.